The following is a 622-amino-acid chain: E3 ubiquitin-protein ligase hrd-1 (622 aa).

The N-terminal stretch at 1-23 (MRVSAGLMIGGSCVATAATVLNA) is a signal peptide. The Lumenal portion of the chain corresponds to 24-41 (FVINKQFYPSIVYLSKSN). Residues 42-62 (ASMAVLYFQGIVLVYLMFQLL) traverse the membrane as a helical segment. Residues 63–99 (KSILFGDLRAAEAEHLSERTWHAVLETCLAFTVFRDD) are Cytoplasmic-facing. A helical membrane pass occupies residues 100 to 120 (FSAMFVMQFIGLLFIKCFHWL). The Lumenal portion of the chain corresponds to 121–141 (ADDRVDMMERSPVITLRFHLR). The chain crosses the membrane as a helical span at residues 142–162 (MMTVLAALGFADSYFVSSAYF). At 163 to 170 (STITKGAS) the chain is on the cytoplasmic side. A helical membrane pass occupies residues 171–191 (SQIVFGFEYAILLALVLHVTI). Over 192–215 (KYLLHMHDLRNPQSWDNKAVYLLY) the chain is Lumenal. Residues 216-236 (AELLINLIRCVLYGFFAVIML) form a helical membrane-spanning segment. The Cytoplasmic segment spans residues 237–622 (RVHTFPLFSV…RFPPPNPEHE (386 aa)). The RING-type; atypical zinc-finger motif lies at 292–333 (CIICREEMTVESSPKRLPCSHVFHAHCLRSWFQRQQTCPTCR). A compositionally biased stretch (pro residues) spans 436–445 (MPPPPIPQPN). 2 disordered regions span residues 436–463 (MPPPPIPQPNAAPGESSNAEPPGRPNFD) and 514–622 (PVPT…PEHE). The segment covering 526–538 (ATASSVPTSVPSE) has biased composition (low complexity). Polar residues predominate over residues 562–577 (FNDTQSTSTPSTSAGP). The span at 579-596 (PSLTPSTSSVPSTSSVRT) shows a compositional bias: low complexity.

Belongs to the HRD1 family. In terms of assembly, homodimer.

The protein localises to the endoplasmic reticulum membrane. It carries out the reaction S-ubiquitinyl-[E2 ubiquitin-conjugating enzyme]-L-cysteine + [acceptor protein]-L-lysine = [E2 ubiquitin-conjugating enzyme]-L-cysteine + N(6)-ubiquitinyl-[acceptor protein]-L-lysine.. Its pathway is protein modification; protein ubiquitination. Functionally, acts as an E3 ubiquitin-protein ligase which accepts ubiquitin specifically from endoplasmic reticulum-associated ubc-7 E2 ligase and transfers it to substrates, promoting their degradation. Component of the endoplasmic reticulum quality control (ERQC) system, which is also called the ER-associated degradation (ERAD) system, involved in ubiquitin-dependent degradation of misfolded endoplasmic reticulum proteins. Also promotes the degradation of normal but naturally short-lived proteins. Protects cells from ER stress-induced apoptosis. Thought to play a role together with hsp-3 in developmental growth and function of intestinal cells and to play a role together with hsp-4 in gonad formation. The chain is E3 ubiquitin-protein ligase hrd-1 from Caenorhabditis briggsae.